The sequence spans 325 residues: Apoptosis-enhancing nuclease (325 aa).

A Nucleolar localization signal motif is present at residues Arg-27–Arg-35. The tract at residues Arg-85–Pro-105 is disordered. The region spanning Cys-110–Tyr-266 is the Exonuclease domain. The short motif at Arg-165 to Lys-188 is the Nuclear localization signal element. Positions Leu-281–Asn-325 are disordered. Over residues Asp-308–Asn-325 the composition is skewed to basic and acidic residues.

It is found in the nucleus. It localises to the nucleolus. In terms of biological role, exonuclease with activity against single- and double-stranded DNA and RNA. Mediates p53-induced apoptosis. When induced by p53 following DNA damage, digests double-stranded DNA to form single-stranded DNA and amplifies DNA damage signals, leading to enhancement of apoptosis. The polypeptide is Apoptosis-enhancing nuclease (AEN) (Homo sapiens (Human)).